Consider the following 220-residue polypeptide: UPF0441 protein Spro_4274 (220 aa).

Positions 181 to 220 (MAPKPAVTNTVTRGGFGESVAKQTSMQRSSATSSSRSMGG) are disordered. Positions 203–220 (QTSMQRSSATSSSRSMGG) are enriched in low complexity.

This sequence belongs to the UPF0441 family.

In Serratia proteamaculans (strain 568), this protein is UPF0441 protein Spro_4274.